The primary structure comprises 294 residues: Protease HtpX homolog 2 (294 aa).

Transmembrane regions (helical) follow at residues 15–35 (MLFTMFLLAAVYLFFLAFLSY) and 36–56 (YGTSQIFIILFIGLFMAAQYF). Zn(2+) is bound at residue H140. E141 is an active-site residue. H144 provides a ligand contact to Zn(2+). Transmembrane regions (helical) follow at residues 151–171 (AVLTIASFLSSVAFYIVRYSL) and 185–205 (GGIMLVWLVSIVVWIVSFLLI). E213 serves as a coordination point for Zn(2+).

This sequence belongs to the peptidase M48B family. It depends on Zn(2+) as a cofactor.

It is found in the cell membrane. The polypeptide is Protease HtpX homolog 2 (Methanosarcina mazei (strain ATCC BAA-159 / DSM 3647 / Goe1 / Go1 / JCM 11833 / OCM 88) (Methanosarcina frisia)).